Here is a 286-residue protein sequence, read N- to C-terminus: 3-amino-tetrahydro-pyrrolizinone reductase (286 aa).

The active-site Proton acceptor is tyrosine 146.

Belongs to the short-chain dehydrogenases/reductases (SDR) family.

The catalysed reaction is 3-amino-5,6,7,7a-tetrahydro-1H-pyrrolizin-1-one + AH2 = 3-amino-tetrahydro-1H-pyrrolizin-1-ol + A. Involved in the biosynthetic pathway of pyrrolizwilline, a pyrrolizidine alkaloid. Catalyzes the reduction of 3-amino-tetrahydro-pyrrolizinone to 3-amino-tetrahydro-pyrrolizinol. The protein is 3-amino-tetrahydro-pyrrolizinone reductase (xhpD) of Xenorhabdus hominickii.